Consider the following 668-residue polypeptide: Ras guanine nucleotide exchange factor D (668 aa).

The 198-residue stretch at 27-224 (KKLESIFGIA…LMVMDIDEFD (198 aa)) folds into the Rho-GAP domain. An N-terminal Ras-GEF domain is found at 237 to 362 (GESIVKAATF…YFQTFFKPVI (126 aa)). The Ras-GEF domain maps to 433–663 (GSNIIAQQIT…HSISHKLEPR (231 aa)).

Promotes the exchange of Ras-bound GDP by GTP. The sequence is that of Ras guanine nucleotide exchange factor D (gefD) from Dictyostelium discoideum (Social amoeba).